A 107-amino-acid polypeptide reads, in one-letter code: Age-related maculopathy susceptibility protein 2 (107 aa).

The segment at 1–21 (MLRLYPGPMVTEAEGKGGPEM) is disordered.

Detected in retina and placenta.

It localises to the cytoplasm. The protein is Age-related maculopathy susceptibility protein 2 (ARMS2) of Homo sapiens (Human).